The chain runs to 337 residues: Holliday junction branch migration complex subunit RuvB (337 aa).

Residues 1–179 (MTHQVAVLHQ…FAFSARLSYY (179 aa)) are large ATPase domain (RuvB-L). ATP is bound by residues Leu18, Arg19, Gly60, Lys63, Thr64, Ser65, 126 to 128 (EDF), Arg169, Tyr179, and Arg216. Thr64 is a binding site for Mg(2+). Residues 180–250 (SDQDLKEILV…VAEKALAMLL (71 aa)) are small ATPAse domain (RuvB-S). The head domain (RuvB-H) stretch occupies residues 253 to 337 (DWGLNEIDIK…KNLLSLGEGQ (85 aa)). DNA contacts are provided by Lys308 and Arg313.

Belongs to the RuvB family. In terms of assembly, homohexamer. Forms an RuvA(8)-RuvB(12)-Holliday junction (HJ) complex. HJ DNA is sandwiched between 2 RuvA tetramers; dsDNA enters through RuvA and exits via RuvB. An RuvB hexamer assembles on each DNA strand where it exits the tetramer. Each RuvB hexamer is contacted by two RuvA subunits (via domain III) on 2 adjacent RuvB subunits; this complex drives branch migration. In the full resolvosome a probable DNA-RuvA(4)-RuvB(12)-RuvC(2) complex forms which resolves the HJ.

The protein resides in the cytoplasm. The enzyme catalyses ATP + H2O = ADP + phosphate + H(+). Functionally, the RuvA-RuvB-RuvC complex processes Holliday junction (HJ) DNA during genetic recombination and DNA repair, while the RuvA-RuvB complex plays an important role in the rescue of blocked DNA replication forks via replication fork reversal (RFR). RuvA specifically binds to HJ cruciform DNA, conferring on it an open structure. The RuvB hexamer acts as an ATP-dependent pump, pulling dsDNA into and through the RuvAB complex. RuvB forms 2 homohexamers on either side of HJ DNA bound by 1 or 2 RuvA tetramers; 4 subunits per hexamer contact DNA at a time. Coordinated motions by a converter formed by DNA-disengaged RuvB subunits stimulates ATP hydrolysis and nucleotide exchange. Immobilization of the converter enables RuvB to convert the ATP-contained energy into a lever motion, pulling 2 nucleotides of DNA out of the RuvA tetramer per ATP hydrolyzed, thus driving DNA branch migration. The RuvB motors rotate together with the DNA substrate, which together with the progressing nucleotide cycle form the mechanistic basis for DNA recombination by continuous HJ branch migration. Branch migration allows RuvC to scan DNA until it finds its consensus sequence, where it cleaves and resolves cruciform DNA. This is Holliday junction branch migration complex subunit RuvB from Chlamydia pneumoniae (Chlamydophila pneumoniae).